The chain runs to 217 residues: Ribulose-phosphate 3-epimerase (217 aa).

S6 is a substrate binding site. A divalent metal cation-binding residues include H29, D31, and H62. D31 functions as the Proton acceptor in the catalytic mechanism. Substrate is bound by residues H62, 138 to 141, 171 to 173, and 193 to 194; these read GFGG, DGG, and GS. D171 is an a divalent metal cation binding site. The Proton donor role is filled by D171.

This sequence belongs to the ribulose-phosphate 3-epimerase family. It depends on a divalent metal cation as a cofactor.

It catalyses the reaction D-ribulose 5-phosphate = D-xylulose 5-phosphate. The protein operates within carbohydrate degradation. Its function is as follows. Catalyzes the reversible epimerization of D-ribulose 5-phosphate to D-xylulose 5-phosphate. The polypeptide is Ribulose-phosphate 3-epimerase (Helicobacter pylori (strain ATCC 700392 / 26695) (Campylobacter pylori)).